Here is a 265-residue protein sequence, read N- to C-terminus: Small ribosomal subunit protein eS1 (265 aa).

Disordered regions lie at residues 1-24 and 240-265; these read MTQG…RTID and HEKK…LLAQ. A compositionally biased stretch (basic and acidic residues) spans 240-253; that stretch reads HEKKGEKATGRDGA.

This sequence belongs to the eukaryotic ribosomal protein eS1 family. Component of the small ribosomal subunit. Mature ribosomes consist of a small (40S) and a large (60S) subunit. The 40S subunit contains about 33 different proteins and 1 molecule of RNA (18S). The 60S subunit contains about 49 different proteins and 3 molecules of RNA (25S, 5.8S and 5S).

The protein localises to the cytoplasm. In Tetrahymena thermophila (strain SB210), this protein is Small ribosomal subunit protein eS1.